A 392-amino-acid polypeptide reads, in one-letter code: Olfactomedin-like protein 3 (392 aa).

An N-terminal signal peptide occupies residues 1-21 (MGPWRCLLLLPLLAAAPRAQQ). A coiled-coil region spans residues 25–99 (MEYVERRLAL…REVDYLETQN (75 aa)). The Olfactomedin-like domain maps to 132–388 (DCSDTIASVR…QIIYRMEMKK (257 aa)). A disulfide bridge links cysteine 133 with cysteine 315. 2 N-linked (GlcNAc...) asparagine glycosylation sites follow: asparagine 175 and asparagine 235.

Belongs to the OLFML3 family.

The protein resides in the secreted. Secreted scaffold protein that plays an essential role in dorsoventral patterning during early development. Stabilizes axial formation by restricting chordin (CHRD) activity on the dorsal side. Acts by facilitating the association between the tolloid proteases and their substrate chordin (CHRD), leading to enhance chordin (CHRD) degradation. The protein is Olfactomedin-like protein 3 (OLFML3) of Gallus gallus (Chicken).